Consider the following 194-residue polypeptide: Probable nicotinate-nucleotide adenylyltransferase (194 aa).

Belongs to the NadD family.

It catalyses the reaction nicotinate beta-D-ribonucleotide + ATP + H(+) = deamido-NAD(+) + diphosphate. It functions in the pathway cofactor biosynthesis; NAD(+) biosynthesis; deamido-NAD(+) from nicotinate D-ribonucleotide: step 1/1. Its function is as follows. Catalyzes the reversible adenylation of nicotinate mononucleotide (NaMN) to nicotinic acid adenine dinucleotide (NaAD). This is Probable nicotinate-nucleotide adenylyltransferase from Brucella abortus (strain 2308).